The sequence spans 92 residues: uncharacterized protein (92 aa).

Basic and acidic residues predominate over residues 1-10; sequence MGLLKKKDST. A disordered region spans residues 1-21; it reads MGLLKKKDSTSARSSTSPCAD. The region spanning 16 to 66 is the CHCH domain; that stretch reads TSPCADLRNAYHNCFNKWYSEKFVKGQWDKEECVAEWKKYRDCLSENLDGK. 2 short sequence motifs (cx9C motif) span residues 19–29 and 48–58; these read CADLRNAYHNC and CVAEWKKYRDC. 2 cysteine pairs are disulfide-bonded: cysteine 19–cysteine 58 and cysteine 29–cysteine 48.

It belongs to the TRIAP1/MDM35 family.

This is an uncharacterized protein from Arabidopsis thaliana (Mouse-ear cress).